Consider the following 411-residue polypeptide: Protein translocase subunit SecY (411 aa).

10 consecutive transmembrane segments (helical) span residues 11-31 (IIFT…PVPG), 52-72 (IFSG…VPYI), 111-131 (ALGW…PYVF), 135-155 (FAFV…IMWL), 163-180 (GIGN…VSGL), 197-217 (SLKF…TICV), 253-273 (VMPI…TQII), 291-311 (LYLL…TSIV), 349-369 (TFLG…IEKV), and 377-397 (GLGA…AKQI).

It belongs to the SecY/SEC61-alpha family. As to quaternary structure, component of the plastid Sec protein translocase complex, which is composed of at least SecY, SecE and SecG.

The protein localises to the plastid. The protein resides in the chloroplast thylakoid membrane. Functionally, the central subunit of the protein translocation channel SecYE. Consists of two halves formed by TMs 1-5 and 6-10. These two domains form a lateral gate at the front which open onto the bilayer between TMs 2 and 7, and are clamped together by SecE at the back. The channel is closed by both a pore ring composed of hydrophobic SecY resides and a short helix (helix 2A) on the extracellular side of the membrane which forms a plug. The polypeptide is Protein translocase subunit SecY (Pyropia yezoensis (Susabi-nori)).